The primary structure comprises 974 residues: Probable proton ATPase 1A (974 aa).

The span at methionine 1–alanine 23 shows a compositional bias: basic and acidic residues. The disordered stretch occupies residues methionine 1–glycine 61. Residues methionine 1–arginine 92 lie on the Cytoplasmic side of the membrane. Residues glycine 93 to leucine 112 form a helical membrane-spanning segment. Over glutamate 113–aspartate 117 the chain is Extracellular. Residues glycine 118–isoleucine 137 form a helical membrane-spanning segment. Topologically, residues lysine 138–arginine 264 are cytoplasmic. A helical transmembrane segment spans residues valine 265 to alanine 286. At arginine 287–histidine 294 the chain is on the extracellular side. A helical transmembrane segment spans residues alanine 295–valine 321. Residues glycine 322 to arginine 630 are Cytoplasmic-facing. Aspartate 351 functions as the 4-aspartylphosphate intermediate in the catalytic mechanism. Aspartate 605 and aspartate 609 together coordinate Mg(2+). A helical membrane pass occupies residues alanine 631–valine 651. Topologically, residues serine 652 to serine 661 are extracellular. A helical membrane pass occupies residues phenylalanine 662–leucine 684. Topologically, residues threonine 685–glutamine 697 are cytoplasmic. A helical membrane pass occupies residues phenylalanine 698 to leucine 712. The Extracellular portion of the chain corresponds to asparagine 713–proline 737. Residue aspartate 714 coordinates Mg(2+). The helical transmembrane segment at valine 738 to glycine 761 threads the bilayer. The Cytoplasmic segment spans residues leucine 762–histidine 812. The chain crosses the membrane as a helical span at residues phenylalanine 813 to phenylalanine 840. Topologically, residues tryptophan 841–tryptophan 868 are extracellular. A helical membrane pass occupies residues valine 869–alanine 887. Residues histidine 888–lysine 974 are Cytoplasmic-facing. Basic and acidic residues predominate over residues glycine 950–isoleucine 959. Residues glycine 950–lysine 974 are disordered.

This sequence belongs to the cation transport ATPase (P-type) (TC 3.A.3) family. Type IIIA subfamily.

The protein resides in the membrane. It carries out the reaction ATP + H2O + H(+)(in) = ADP + phosphate + 2 H(+)(out). This chain is Probable proton ATPase 1A (H1A), found in Leishmania donovani.